We begin with the raw amino-acid sequence, 332 residues long: Methionine synthase (332 aa).

Histidine 211, cysteine 213, and cysteine 296 together coordinate Zn(2+).

The protein belongs to the archaeal MetE family. Requires Zn(2+) as cofactor.

Its pathway is amino-acid biosynthesis; L-methionine biosynthesis via de novo pathway. In terms of biological role, catalyzes the transfer of a methyl group to L-homocysteine resulting in methionine formation. The physiological methyl donor is unknown. This chain is Methionine synthase, found in Saccharolobus islandicus (strain Y.N.15.51 / Yellowstone #2) (Sulfolobus islandicus).